Consider the following 369-residue polypeptide: Peridinin-chlorophyll a-binding protein 2, chloroplastic (369 aa).

A chloroplast-targeting transit peptide spans methionine 1–alanine 56. 2 consecutive repeat copies span residues aspartate 57–glycine 219 and aspartate 220–arginine 369.

In terms of assembly, homotrimer.

Its subcellular location is the plastid. It is found in the chloroplast. In terms of biological role, water-soluble antenna for capture of solar energy in the blue-green range. Peridinin is an asymmetric carotenoid. The protein is Peridinin-chlorophyll a-binding protein 2, chloroplastic of Amphidinium carterae (Dinoflagellate).